Reading from the N-terminus, the 273-residue chain is Dermonecrotic toxin LarSicTox-alphaIB1b (273 aa).

The active site involves His-5. Mg(2+) is bound by residues Glu-25 and Asp-27. The active-site Nucleophile is the His-41. Intrachain disulfides connect Cys-45–Cys-51 and Cys-47–Cys-190. Asp-85 provides a ligand contact to Mg(2+). Asn-250 is a glycosylation site (N-linked (GlcNAc...) asparagine).

This sequence belongs to the arthropod phospholipase D family. Class II subfamily. The cofactor is Mg(2+). As to expression, expressed by the venom gland.

Its subcellular location is the secreted. The catalysed reaction is an N-(acyl)-sphingosylphosphocholine = an N-(acyl)-sphingosyl-1,3-cyclic phosphate + choline. It catalyses the reaction an N-(acyl)-sphingosylphosphoethanolamine = an N-(acyl)-sphingosyl-1,3-cyclic phosphate + ethanolamine. The enzyme catalyses a 1-acyl-sn-glycero-3-phosphocholine = a 1-acyl-sn-glycero-2,3-cyclic phosphate + choline. It carries out the reaction a 1-acyl-sn-glycero-3-phosphoethanolamine = a 1-acyl-sn-glycero-2,3-cyclic phosphate + ethanolamine. Dermonecrotic toxins cleave the phosphodiester linkage between the phosphate and headgroup of certain phospholipids (sphingolipid and lysolipid substrates), forming an alcohol (often choline) and a cyclic phosphate. This toxin acts on sphingomyelin (SM). It may also act on ceramide phosphoethanolamine (CPE), lysophosphatidylcholine (LPC) and lysophosphatidylethanolamine (LPE), but not on lysophosphatidylserine (LPS), and lysophosphatidylglycerol (LPG). It acts by transphosphatidylation, releasing exclusively cyclic phosphate products as second products. Induces dermonecrosis, hemolysis, increased vascular permeability, edema, inflammatory response, and platelet aggregation. The chain is Dermonecrotic toxin LarSicTox-alphaIB1b from Loxosceles arizonica (Arizona brown spider).